The sequence spans 501 residues: Zinc finger and SCAN domain-containing protein 12 (501 aa).

Glycyl lysine isopeptide (Lys-Gly) (interchain with G-Cter in SUMO2) cross-links involve residues K20 and K26. The 82-residue stretch at 51–132 (QFCYQETSGP…DLERELDELG (82 aa)) folds into the SCAN box domain. The interval 175–194 (REAQEEQVSGVETGNEPRNV) is disordered. Residues 180-194 (EQVSGVETGNEPRNV) show a composition bias toward polar residues. A Glycyl lysine isopeptide (Lys-Gly) (interchain with G-Cter in SUMO2) cross-link involves residue K197. The interval 223–255 (EAHNPGEESSGISHEDSQPLRNENGVNSPANSE) is disordered. Polar residues predominate over residues 241–253 (PLRNENGVNSPAN). C2H2-type zinc fingers lie at residues 269 to 291 (HGCD…KRVH), 297 to 319 (YKCE…KVVH), 325 to 347 (YKCN…QRLH), 353 to 375 (YHCN…LKSH), 381 to 403 (YQCL…QGVH), and 409 to 431 (YECN…QETH). A disordered region spans residues 429–450 (ETHHKEKPFTQSGPIQQQRNHT). Positions 437 to 447 (FTQSGPIQQQR) are enriched in polar residues. Residues 455–477 (YKCSVCGKAFIQKISLIEHEQIH) form a C2H2-type 7 zinc finger. The C2H2-type 8; degenerate zinc finger occupies 483 to 501 (YKCAEGGKAFIQMSELTEH).

This sequence belongs to the krueppel C2H2-type zinc-finger protein family. Testis specific.

Its subcellular location is the nucleus. May be involved in transcriptional regulation. The polypeptide is Zinc finger and SCAN domain-containing protein 12 (Zscan12) (Mus musculus (Mouse)).